A 102-amino-acid chain; its full sequence is Small ribosomal subunit protein uS10 (102 aa).

Belongs to the universal ribosomal protein uS10 family. As to quaternary structure, part of the 30S ribosomal subunit.

In terms of biological role, involved in the binding of tRNA to the ribosomes. The protein is Small ribosomal subunit protein uS10 of Akkermansia muciniphila (strain ATCC BAA-835 / DSM 22959 / JCM 33894 / BCRC 81048 / CCUG 64013 / CIP 107961 / Muc).